A 438-amino-acid polypeptide reads, in one-letter code: Glutamyl-tRNA(Gln) amidotransferase subunit D (438 aa).

Positions 92-422 (PDVTIIGTGG…EEVRRMMLTN (331 aa)) constitute an Asparaginase/glutaminase domain. Residues Thr-102, Thr-178, Asp-179, and Lys-256 contribute to the active site.

Belongs to the asparaginase 1 family. GatD subfamily. In terms of assembly, heterodimer of GatD and GatE.

It carries out the reaction L-glutamyl-tRNA(Gln) + L-glutamine + ATP + H2O = L-glutaminyl-tRNA(Gln) + L-glutamate + ADP + phosphate + H(+). Its function is as follows. Allows the formation of correctly charged Gln-tRNA(Gln) through the transamidation of misacylated Glu-tRNA(Gln) in organisms which lack glutaminyl-tRNA synthetase. The reaction takes place in the presence of glutamine and ATP through an activated gamma-phospho-Glu-tRNA(Gln). The GatDE system is specific for glutamate and does not act on aspartate. The protein is Glutamyl-tRNA(Gln) amidotransferase subunit D of Pyrococcus horikoshii (strain ATCC 700860 / DSM 12428 / JCM 9974 / NBRC 100139 / OT-3).